We begin with the raw amino-acid sequence, 386 residues long: MVTPSLRLVFVKGPREGDALDYKPGSTIRVGRIVRGNEIAIKDAGISTKHLRIESDSGNWVIQDLGSSNGTLLNSNALDPETSVNLGDGDVIKLGEYTSILVNFVIDDFQEKKLTRNNRRQANARKRIRVLESINLGDITEEEKGLDVKFENKPSSRVRKVRKIEDSEKLGITDGLQEDLVEKNGSFRNVESIQSSSVNLIKVEMEDCAMVEENLGRGLKKRVSSKATRSKKIEESVGKACLGVVNVEKVETLKEKRITRATRSKKIDIVGDSYLELDMVLNRARKNKGKNKKADQKPLKSFENDEVTDSGEQGLSCHVEEDMNNELDTDLRKMTLGALFSFLEGHLSKEIIHKTENMIEPMRSKTQRVREYISDQRKVQAKACMC.

The 51-residue stretch at 28-78 (IRVGRIVRGNEIAIKDAGISTKHLRIESDSGNWVIQDLGSSNGTLLNSNAL) folds into the FHA domain. The disordered stretch occupies residues 286–311 (KNKGKNKKADQKPLKSFENDEVTDSG). Positions 292-303 (KKADQKPLKSFE) are enriched in basic and acidic residues.

The protein is FHA domain-containing protein At4g14490 of Arabidopsis thaliana (Mouse-ear cress).